Reading from the N-terminus, the 235-residue chain is Proteasome subunit beta type-1 (235 aa).

Positions 1-20 (MSRLGFEQFPDYQVPGMKHP) are excised as a propeptide.

The protein belongs to the peptidase T1B family. The 26S proteasome consists of a 20S proteasome core and two 19S regulatory subunits. The 20S proteasome core is composed of 28 subunits that are arranged in four stacked rings, resulting in a barrel-shaped structure. The two end rings are each formed by seven alpha subunits, and the two central rings are each formed by seven beta subunits. The catalytic chamber with the active sites is on the inside of the barrel.

The protein resides in the cytoplasm. Its subcellular location is the nucleus. Its function is as follows. Non-catalytic component of the proteasome, a multicatalytic proteinase complex which is characterized by its ability to cleave peptides with Arg, Phe, Tyr, Leu, and Glu adjacent to the leaving group at neutral or slightly basic pH. The proteasome has an ATP-dependent proteolytic activity. This chain is Proteasome subunit beta type-1 (Prosbeta6), found in Drosophila melanogaster (Fruit fly).